The primary structure comprises 449 residues: Trigger factor (449 aa).

Residues 173–258 form the PPIase FKBP-type domain; it reads GDRVTLDFVG…LKKVEWAHLP (86 aa).

Belongs to the FKBP-type PPIase family. Tig subfamily.

The protein resides in the cytoplasm. It carries out the reaction [protein]-peptidylproline (omega=180) = [protein]-peptidylproline (omega=0). Functionally, involved in protein export. Acts as a chaperone by maintaining the newly synthesized protein in an open conformation. Functions as a peptidyl-prolyl cis-trans isomerase. This chain is Trigger factor, found in Cupriavidus metallidurans (strain ATCC 43123 / DSM 2839 / NBRC 102507 / CH34) (Ralstonia metallidurans).